A 494-amino-acid polypeptide reads, in one-letter code: UDP-N-acetylmuramate--L-alanine ligase (494 aa).

134-140 lines the ATP pocket; it reads GSHGKTT.

It belongs to the MurCDEF family.

The protein localises to the cytoplasm. The enzyme catalyses UDP-N-acetyl-alpha-D-muramate + L-alanine + ATP = UDP-N-acetyl-alpha-D-muramoyl-L-alanine + ADP + phosphate + H(+). The protein operates within cell wall biogenesis; peptidoglycan biosynthesis. Cell wall formation. The chain is UDP-N-acetylmuramate--L-alanine ligase from Prochlorococcus marinus (strain NATL1A).